The primary structure comprises 159 residues: 2-C-methyl-D-erythritol 2,4-cyclodiphosphate synthase (159 aa).

2 residues coordinate a divalent metal cation: D8 and H10. Residues 8 to 10 and 34 to 35 each bind 4-CDP-2-C-methyl-D-erythritol 2-phosphate; these read DVH and HS. H42 contacts a divalent metal cation. Residues 56 to 58, 61 to 65, 132 to 135, F139, and R142 each bind 4-CDP-2-C-methyl-D-erythritol 2-phosphate; these read DIG, FPDTD, and TTTE.

The protein belongs to the IspF family. As to quaternary structure, homotrimer. The cofactor is a divalent metal cation.

It carries out the reaction 4-CDP-2-C-methyl-D-erythritol 2-phosphate = 2-C-methyl-D-erythritol 2,4-cyclic diphosphate + CMP. Its pathway is isoprenoid biosynthesis; isopentenyl diphosphate biosynthesis via DXP pathway; isopentenyl diphosphate from 1-deoxy-D-xylulose 5-phosphate: step 4/6. Involved in the biosynthesis of isopentenyl diphosphate (IPP) and dimethylallyl diphosphate (DMAPP), two major building blocks of isoprenoid compounds. Catalyzes the conversion of 4-diphosphocytidyl-2-C-methyl-D-erythritol 2-phosphate (CDP-ME2P) to 2-C-methyl-D-erythritol 2,4-cyclodiphosphate (ME-CPP) with a corresponding release of cytidine 5-monophosphate (CMP). This Finegoldia magna (strain ATCC 29328 / DSM 20472 / WAL 2508) (Peptostreptococcus magnus) protein is 2-C-methyl-D-erythritol 2,4-cyclodiphosphate synthase.